The following is a 210-amino-acid chain: Large ribosomal subunit protein uL4 (210 aa).

A compositionally biased stretch (polar residues) spans 44–54 (KRQGTASTLTR). Positions 44–85 (KRQGTASTLTRSEVRGGGRKPYKQKGTGRARQGSIRTPLRPG) are disordered. The segment covering 60 to 71 (GGRKPYKQKGTG) has biased composition (basic residues).

It belongs to the universal ribosomal protein uL4 family. As to quaternary structure, part of the 50S ribosomal subunit.

Its function is as follows. One of the primary rRNA binding proteins, this protein initially binds near the 5'-end of the 23S rRNA. It is important during the early stages of 50S assembly. It makes multiple contacts with different domains of the 23S rRNA in the assembled 50S subunit and ribosome. In terms of biological role, forms part of the polypeptide exit tunnel. In Prochlorococcus marinus (strain MIT 9301), this protein is Large ribosomal subunit protein uL4.